A 761-amino-acid polypeptide reads, in one-letter code: BMP/retinoic acid-inducible neural-specific protein 1 (761 aa).

An N-terminal signal peptide occupies residues Met-1–Pro-22. The 184-residue stretch at Arg-68 to Met-251 folds into the MACPF domain. N-linked (GlcNAc...) asparagine glycans are attached at residues Asn-156, Asn-433, Asn-443, Asn-553, Asn-599, Asn-631, and Asn-677.

This sequence belongs to the BRINP family.

Its subcellular location is the cytoplasm. In terms of biological role, plays a role in neurogenesis and brain development. May suppress cell cycle progression in postmitotic neurons by inhibiting G1/S transition. The polypeptide is BMP/retinoic acid-inducible neural-specific protein 1 (BRINP1) (Gallus gallus (Chicken)).